We begin with the raw amino-acid sequence, 1169 residues long: ATP-dependent helicase/deoxyribonuclease subunit B (1169 aa).

Residues 1 to 296 enclose the UvrD-like helicase ATP-binding domain; it reads MTLRIVSGRS…QHVEANFANM (296 aa). 8 to 15 provides a ligand contact to ATP; sequence GRSGTGKS. The UvrD-like helicase C-terminal domain occupies 276 to 582; it reads YYTQRFQSED…EFSRIPPTLD (307 aa). [4Fe-4S] cluster contacts are provided by Cys-804, Cys-1129, Cys-1132, and Cys-1138.

This sequence belongs to the helicase family. AddB/RexB type 1 subfamily. As to quaternary structure, heterodimer of AddA and AddB. The cofactor is Mg(2+). It depends on [4Fe-4S] cluster as a cofactor.

Functionally, the heterodimer acts as both an ATP-dependent DNA helicase and an ATP-dependent, dual-direction single-stranded exonuclease. Recognizes the chi site generating a DNA molecule suitable for the initiation of homologous recombination. The AddB subunit has 5' -&gt; 3' nuclease activity but not helicase activity. The chain is ATP-dependent helicase/deoxyribonuclease subunit B from Lysinibacillus sphaericus (strain C3-41).